The sequence spans 910 residues: Protein translocase subunit SecA (910 aa).

ATP is bound by residues Gln-89, 107–111, and Asp-502; that span reads GEGKT. Cys-894, Cys-896, Cys-905, and His-906 together coordinate Zn(2+).

Belongs to the SecA family. In terms of assembly, monomer and homodimer. Part of the essential Sec protein translocation apparatus which comprises SecA, SecYEG and auxiliary proteins SecDF-YajC and YidC. Zn(2+) is required as a cofactor.

Its subcellular location is the cell inner membrane. The protein localises to the cytoplasm. The catalysed reaction is ATP + H2O + cellular proteinSide 1 = ADP + phosphate + cellular proteinSide 2.. Functionally, part of the Sec protein translocase complex. Interacts with the SecYEG preprotein conducting channel. Has a central role in coupling the hydrolysis of ATP to the transfer of proteins into and across the cell membrane, serving both as a receptor for the preprotein-SecB complex and as an ATP-driven molecular motor driving the stepwise translocation of polypeptide chains across the membrane. This is Protein translocase subunit SecA from Chelativorans sp. (strain BNC1).